The sequence spans 349 residues: tRNA pseudouridine synthase D (349 aa).

Residue phenylalanine 27 coordinates substrate. The active-site Nucleophile is aspartate 80. Asparagine 129 contacts substrate. Residues 155-303 form the TRUD domain; the sequence is GVPNYFGAQR…VEASRRAMLL (149 aa). Phenylalanine 329 is a substrate binding site.

The protein belongs to the pseudouridine synthase TruD family.

It catalyses the reaction uridine(13) in tRNA = pseudouridine(13) in tRNA. Responsible for synthesis of pseudouridine from uracil-13 in transfer RNAs. The sequence is that of tRNA pseudouridine synthase D from Salmonella newport (strain SL254).